The sequence spans 496 residues: Cytochrome P450 71D181 (496 aa).

The chain crosses the membrane as a helical; Signal-anchor for type II membrane protein span at residues 1–21 (MDISILWVAIILVISSYFIFM). Residue C435 coordinates heme. Positions 471 to 496 (MSETPGLSGPRKNPLIMVPTIHNPTS) are disordered.

It belongs to the cytochrome P450 family. Heme serves as cofactor.

The protein localises to the membrane. It catalyses the reaction gamma-terpinene + 2 reduced [NADPH--hemoprotein reductase] + 2 O2 = carvacrol + 2 oxidized [NADPH--hemoprotein reductase] + 3 H2O + 2 H(+). It carries out the reaction (4S)-limonene + reduced [NADPH--hemoprotein reductase] + O2 = (1S,5R)-carveol + oxidized [NADPH--hemoprotein reductase] + H2O + H(+). The enzyme catalyses (4R)-limonene + reduced [NADPH--hemoprotein reductase] + O2 = (1R,5S)-carveol + oxidized [NADPH--hemoprotein reductase] + H2O + H(+). The catalysed reaction is alpha-terpinene + 2 reduced [NADPH--hemoprotein reductase] + 2 O2 = carvacrol + 2 oxidized [NADPH--hemoprotein reductase] + 3 H2O + 2 H(+). Its pathway is secondary metabolite biosynthesis; terpenoid biosynthesis. In terms of biological role, involved in the biosynthesis of phenolic monoterpenes natural products thymol and carvacrol which have a broad range of biological activities acting as antimicrobial compounds, insecticides, antioxidants and pharmaceutical agents. Catalyzes the C2-hydroxylation of gamma-terpinene and alpha-terpinene to produce carvacrol. Also mediates the C6-hydroxylation of (4S)-limonene and (4R)-limonene to form carveol. This Thymus vulgaris (Thyme) protein is Cytochrome P450 71D181.